We begin with the raw amino-acid sequence, 280 residues long: Ribosomal RNA-processing protein 7 homolog A (280 aa).

One can recognise an RRM domain in the interval 59–159 (RTLFVLNVPP…TGIHKWISDY (101 aa)). S99 bears the Phosphoserine mark.

This sequence belongs to the RRP7 family. In terms of assembly, part of the small subunit (SSU) processome, composed of more than 70 proteins and the RNA chaperone small nucleolar RNA (snoRNA) U3. Interacts with NOL6; required for NOL6 localization to nucleolus.

It is found in the nucleus. The protein resides in the nucleolus. The protein localises to the cell projection. Its subcellular location is the cilium. It localises to the cytoplasm. It is found in the cytoskeleton. The protein resides in the microtubule organizing center. The protein localises to the centrosome. Functionally, nucleolar protein that is involved in ribosomal RNA (rRNA) processing. Also plays a role in primary cilia resorption, and cell cycle progression in neurogenesis and neocortex development. Part of the small subunit (SSU) processome, first precursor of the small eukaryotic ribosomal subunit. During the assembly of the SSU processome in the nucleolus, many ribosome biogenesis factors, an RNA chaperone and ribosomal proteins associate with the nascent pre-rRNA and work in concert to generate RNA folding, modifications, rearrangements and cleavage as well as targeted degradation of pre-ribosomal RNA by the RNA exosome. The protein is Ribosomal RNA-processing protein 7 homolog A (RRP7A) of Pongo abelii (Sumatran orangutan).